The sequence spans 365 residues: Chaperone protein DnaJ (365 aa).

A J domain is found at 5–71 (DFYEILGIAK…QKRQAYDQFG (67 aa)). A CR-type zinc finger spans residues 128 to 206 (GTTVKIRIPK…CHGKGVVHKQ (79 aa)). Zn(2+) is bound by residues Cys-141, Cys-144, Cys-158, Cys-161, Cys-180, Cys-183, Cys-194, and Cys-197. 4 CXXCXGXG motif repeats span residues 141 to 148 (CDTCSGTG), 158 to 165 (CLTCGGAG), 180 to 187 (CNACSGTG), and 194 to 201 (CNNCHGKG).

It belongs to the DnaJ family. As to quaternary structure, homodimer. Requires Zn(2+) as cofactor.

It localises to the cytoplasm. Participates actively in the response to hyperosmotic and heat shock by preventing the aggregation of stress-denatured proteins and by disaggregating proteins, also in an autonomous, DnaK-independent fashion. Unfolded proteins bind initially to DnaJ; upon interaction with the DnaJ-bound protein, DnaK hydrolyzes its bound ATP, resulting in the formation of a stable complex. GrpE releases ADP from DnaK; ATP binding to DnaK triggers the release of the substrate protein, thus completing the reaction cycle. Several rounds of ATP-dependent interactions between DnaJ, DnaK and GrpE are required for fully efficient folding. Also involved, together with DnaK and GrpE, in the DNA replication of plasmids through activation of initiation proteins. In Vesicomyosocius okutanii subsp. Calyptogena okutanii (strain HA), this protein is Chaperone protein DnaJ.